A 455-amino-acid chain; its full sequence is tRNA modification GTPase MnmE (455 aa).

(6S)-5-formyl-5,6,7,8-tetrahydrofolate contacts are provided by R24, E81, and K121. The region spanning 217 to 378 is the TrmE-type G domain; the sequence is GMKVVIAGRP…LREHLKDCMG (162 aa). N227 provides a ligand contact to K(+). Residues 227–232, 246–252, 271–274, and 359–361 each bind GTP; these read NAGKSS, TDIAGTT, DTAG, and SAR. S231 serves as a coordination point for Mg(2+). Positions 246, 248, and 251 each coordinate K(+). T252 contributes to the Mg(2+) binding site. K455 lines the (6S)-5-formyl-5,6,7,8-tetrahydrofolate pocket.

Belongs to the TRAFAC class TrmE-Era-EngA-EngB-Septin-like GTPase superfamily. TrmE GTPase family. As to quaternary structure, homodimer. Heterotetramer of two MnmE and two MnmG subunits. It depends on K(+) as a cofactor.

The protein resides in the cytoplasm. In terms of biological role, exhibits a very high intrinsic GTPase hydrolysis rate. Involved in the addition of a carboxymethylaminomethyl (cmnm) group at the wobble position (U34) of certain tRNAs, forming tRNA-cmnm(5)s(2)U34. The protein is tRNA modification GTPase MnmE of Photobacterium profundum (strain SS9).